The sequence spans 458 residues: ATP synthase subunit beta (458 aa).

148–155 (GGAGVGKT) contributes to the ATP binding site.

This sequence belongs to the ATPase alpha/beta chains family. F-type ATPases have 2 components, CF(1) - the catalytic core - and CF(0) - the membrane proton channel. CF(1) has five subunits: alpha(3), beta(3), gamma(1), delta(1), epsilon(1). CF(0) has three main subunits: a(1), b(2) and c(9-12). The alpha and beta chains form an alternating ring which encloses part of the gamma chain. CF(1) is attached to CF(0) by a central stalk formed by the gamma and epsilon chains, while a peripheral stalk is formed by the delta and b chains.

The protein localises to the cell inner membrane. It catalyses the reaction ATP + H2O + 4 H(+)(in) = ADP + phosphate + 5 H(+)(out). Produces ATP from ADP in the presence of a proton gradient across the membrane. The catalytic sites are hosted primarily by the beta subunits. This chain is ATP synthase subunit beta, found in Pseudomonas fluorescens (strain SBW25).